We begin with the raw amino-acid sequence, 82 residues long: Cytochrome b559 subunit alpha (82 aa).

A helical transmembrane segment spans residues 22 to 36; sequence IIHAVTLPAIFIAGF. Histidine 24 serves as a coordination point for heme.

It belongs to the PsbE/PsbF family. In terms of assembly, heterodimer of an alpha subunit and a beta subunit. PSII is composed of 1 copy each of membrane proteins PsbA, PsbB, PsbC, PsbD, PsbE, PsbF, PsbH, PsbI, PsbJ, PsbK, PsbL, PsbM, PsbT, PsbX, PsbY, Psb30/Ycf12, peripheral proteins PsbO, CyanoQ (PsbQ), PsbU, PsbV and a large number of cofactors. It forms dimeric complexes. Heme b serves as cofactor.

The protein localises to the cellular thylakoid membrane. This b-type cytochrome is tightly associated with the reaction center of photosystem II (PSII). PSII is a light-driven water:plastoquinone oxidoreductase that uses light energy to abstract electrons from H(2)O, generating O(2) and a proton gradient subsequently used for ATP formation. It consists of a core antenna complex that captures photons, and an electron transfer chain that converts photonic excitation into a charge separation. This is Cytochrome b559 subunit alpha from Prochlorococcus marinus (strain MIT 9515).